The chain runs to 333 residues: Ornithine carbamoyltransferase (333 aa).

Residues 56-59, glutamine 83, arginine 107, and 134-137 contribute to the carbamoyl phosphate site; these read STRT and HPTQ. L-ornithine-binding positions include asparagine 167, aspartate 231, and 235–236; that span reads SM. Carbamoyl phosphate-binding positions include 273–274 and arginine 318; that span reads CL.

It belongs to the aspartate/ornithine carbamoyltransferase superfamily. OTCase family.

Its subcellular location is the cytoplasm. It catalyses the reaction carbamoyl phosphate + L-ornithine = L-citrulline + phosphate + H(+). It functions in the pathway amino-acid biosynthesis; L-arginine biosynthesis; L-arginine from L-ornithine and carbamoyl phosphate: step 1/3. Its function is as follows. Reversibly catalyzes the transfer of the carbamoyl group from carbamoyl phosphate (CP) to the N(epsilon) atom of ornithine (ORN) to produce L-citrulline. The sequence is that of Ornithine carbamoyltransferase (argF) from Staphylococcus aureus (strain COL).